Reading from the N-terminus, the 296-residue chain is Lipoyl synthase (296 aa).

Residues Cys-37, Cys-42, Cys-48, Cys-63, Cys-67, Cys-70, and Ser-276 each contribute to the [4Fe-4S] cluster site. The region spanning 49 to 265 is the Radical SAM core domain; that stretch reads WSKKHTTVMI…ERVAKTKGFL (217 aa).

Belongs to the radical SAM superfamily. Lipoyl synthase family. It depends on [4Fe-4S] cluster as a cofactor.

It localises to the cytoplasm. The enzyme catalyses [[Fe-S] cluster scaffold protein carrying a second [4Fe-4S](2+) cluster] + N(6)-octanoyl-L-lysyl-[protein] + 2 oxidized [2Fe-2S]-[ferredoxin] + 2 S-adenosyl-L-methionine + 4 H(+) = [[Fe-S] cluster scaffold protein] + N(6)-[(R)-dihydrolipoyl]-L-lysyl-[protein] + 4 Fe(3+) + 2 hydrogen sulfide + 2 5'-deoxyadenosine + 2 L-methionine + 2 reduced [2Fe-2S]-[ferredoxin]. Its pathway is protein modification; protein lipoylation via endogenous pathway; protein N(6)-(lipoyl)lysine from octanoyl-[acyl-carrier-protein]: step 2/2. Functionally, catalyzes the radical-mediated insertion of two sulfur atoms into the C-6 and C-8 positions of the octanoyl moiety bound to the lipoyl domains of lipoate-dependent enzymes, thereby converting the octanoylated domains into lipoylated derivatives. In Rickettsia massiliae (strain Mtu5), this protein is Lipoyl synthase.